A 68-amino-acid polypeptide reads, in one-letter code: Figainin 1 (68 aa).

A signal peptide spans 1–22 (MAFLKKSLFLVLFLGLVSLSIG). Residues 23 to 45 (EEEKREEEEKNEEGANQEENAEN) form a disordered region. Positions 23–47 (EEEKREEEEKNEEGANQEENAENKE) are excised as a propeptide. Over residues 26-42 (KREEEEKNEEGANQEEN) the composition is skewed to acidic residues. Lys-67 bears the Lysine amide mark.

Expressed by the skin glands.

The protein localises to the secreted. In terms of biological role, antimicrobial peptide that displays antibacterial and antiprotozoal activity. Exhibits antibacterial activity against the Gram-positive bacteria S.epidermidis ATCC 12228 (MIC=2 uM), E.casseliflavus ATCC 700327 (MIC=16 uM), S.aureus ATCC 25923 (MIC=4 uM) and E.faecalis ATCC 29212 (MIC=8 uM), and the Gram-negative bacteria E.coli ATCC 25922 (MIC=16 uM) and K.pneumoniae ATCC 13883 (MIC=4 uM). Displays antiprotozoal activity against the epimastigote form of T.cruzi (IC(50)=15.9 uM). Does not show antimicrobial activity against the Gram-negative bacterium P.aeruginosa ATCC 27853, or the fungi C.albicans ATCC 90028 and C.parapsilosis ATCC 22019. Shows high cytolytic activity against human erythrocytes (HC(50)=10 uM), and displays anti-proliferative effects against various cancer cell lines including MCF-7 breast cancer cells (IC(50)=13.7 uM), HeLa cervical adenocarcinoma cells (IC(50)=11.1 uM) and B16F10 murine melanoma cells (IC(50)=10.5 uM). This chain is Figainin 1, found in Boana raniceps (Chaco tree frog).